A 155-amino-acid chain; its full sequence is Small ribosomal subunit protein bS6 (155 aa).

Residues 94–155 form a disordered region; the sequence is EEHETEPSAM…RDDNSDGGQE (62 aa). The segment covering 107–149 has biased composition (basic and acidic residues); it reads RGDRGDRGDRRGGDRFGDRDRGDRGDRGSSRFGDRERPRRDDN.

This sequence belongs to the bacterial ribosomal protein bS6 family.

In terms of biological role, binds together with bS18 to 16S ribosomal RNA. The polypeptide is Small ribosomal subunit protein bS6 (Parvibaculum lavamentivorans (strain DS-1 / DSM 13023 / NCIMB 13966)).